The sequence spans 338 residues: Nicotinate-nucleotide--dimethylbenzimidazole phosphoribosyltransferase (338 aa).

Catalysis depends on Glu-306, which acts as the Proton acceptor.

This sequence belongs to the CobT family.

The enzyme catalyses 5,6-dimethylbenzimidazole + nicotinate beta-D-ribonucleotide = alpha-ribazole 5'-phosphate + nicotinate + H(+). It participates in nucleoside biosynthesis; alpha-ribazole biosynthesis; alpha-ribazole from 5,6-dimethylbenzimidazole: step 1/2. Its function is as follows. Catalyzes the synthesis of alpha-ribazole-5'-phosphate from nicotinate mononucleotide (NAMN) and 5,6-dimethylbenzimidazole (DMB). This is Nicotinate-nucleotide--dimethylbenzimidazole phosphoribosyltransferase from Cereibacter sphaeroides (strain KD131 / KCTC 12085) (Rhodobacter sphaeroides).